We begin with the raw amino-acid sequence, 363 residues long: Protein RecA (363 aa).

An ATP-binding site is contributed by 66–73 (GPESSGKT). The segment at 327-363 (YGIDEKSIADRENPEKIKEKREETSEENKTDNSEKTK) is disordered. Over residues 329 to 363 (IDEKSIADRENPEKIKEKREETSEENKTDNSEKTK) the composition is skewed to basic and acidic residues.

This sequence belongs to the RecA family.

It localises to the cytoplasm. In terms of biological role, can catalyze the hydrolysis of ATP in the presence of single-stranded DNA, the ATP-dependent uptake of single-stranded DNA by duplex DNA, and the ATP-dependent hybridization of homologous single-stranded DNAs. It interacts with LexA causing its activation and leading to its autocatalytic cleavage. This chain is Protein RecA, found in Lactobacillus acidophilus (strain ATCC 700396 / NCK56 / N2 / NCFM).